Consider the following 475-residue polypeptide: Pregnancy-specific glycoprotein 22 (475 aa).

The first 35 residues, 1–35, serve as a signal peptide directing secretion; sequence MEVSSELLSNGWTSWQRVLLTASLLTCWLLPITAG. 3 Ig-like V-type domains span residues 44 to 140, 162 to 260, and 280 to 380; these read KLVE…FLQV, PASV…YLQV, and PVPP…QVNV. N-linked (GlcNAc...) asparagine glycosylation is found at asparagine 103, asparagine 110, and asparagine 231. The Ig-like C2-type domain occupies 387 to 471; it reads PVMRVTDSTV…SKTSLPVRLT (85 aa). Cysteine 406 and cysteine 454 form a disulfide bridge.

The protein belongs to the immunoglobulin superfamily. CEA family.

Its subcellular location is the secreted. Its function is as follows. May have an angiogenic function during early placental development. Binds to cell-surface heparan sulfate proteoglycans (HSPGs), and stimulates secretion of the proangiogenic factors VEGFA and TGFB from uterine dendritic cells and natural killer cells. Also induces endothelial tube formation in vitro. This Mus musculus (Mouse) protein is Pregnancy-specific glycoprotein 22.